We begin with the raw amino-acid sequence, 385 residues long: MYVRHLGLRDFRSWAHADLELQPGRTVFIGSNGFGKTNLLEALWYSSTLGSHRVGTDAPLIRAGADRTVVSTIVVNDGRECAVDLEIAAGRANKARLNRSPVRSTREVLGVLRAVLFAPEDLALVRGDPSERRRYLDDLATLRRPAIAAVRADYDKVLRQRTALLKSLSGARHRGDRGALDTLDVWDSRLAEYGAQLMAARIDLVNQLAPEVEKAYQLLAPGSRAASIGYRSSLGAAAAAEVNAGDRDYLEAALLAGLAARRYAELERGVCLVGPHRDDLELWLGEQVAKGFASHGESWSLALSLRLAAYELLRADESDPVLLLDDVFAELDAARRRALAAVAESAEQVLVTAAVLEDIPAGWQARRLFVELRDTDAGRVSELRP.

Gly-30–Thr-37 is a binding site for ATP.

Belongs to the RecF family.

It localises to the cytoplasm. Functionally, the RecF protein is involved in DNA metabolism; it is required for DNA replication and normal SOS inducibility. RecF binds preferentially to single-stranded, linear DNA. It also seems to bind ATP. The sequence is that of DNA replication and repair protein RecF from Mycobacterium avium (strain 104).